We begin with the raw amino-acid sequence, 260 residues long: 3'-5' ssDNA/RNA exonuclease TatD (260 aa).

A divalent metal cation-binding residues include E92, H128, and H153.

Belongs to the metallo-dependent hydrolases superfamily. TatD-type hydrolase family. TatD subfamily. In terms of assembly, monomer. Mg(2+) is required as a cofactor.

The protein localises to the cytoplasm. 3'-5' exonuclease that prefers single-stranded DNA and RNA. May play a role in the H(2)O(2)-induced DNA damage repair. The sequence is that of 3'-5' ssDNA/RNA exonuclease TatD from Pectobacterium carotovorum subsp. carotovorum (strain PC1).